We begin with the raw amino-acid sequence, 243 residues long: Cell division protein ZipA (243 aa).

The Periplasmic segment spans residues Met1–Val4. Residues Thr5 to Phe25 form a helical membrane-spanning segment. Over Ser26 to Trp243 the chain is Cytoplasmic. The segment at Ala32–Lys89 is disordered. The segment covering Lys38–Pro49 has biased composition (basic and acidic residues).

Belongs to the ZipA family. As to quaternary structure, interacts with FtsZ via their C-terminal domains.

The protein localises to the cell inner membrane. Its function is as follows. Essential cell division protein that stabilizes the FtsZ protofilaments by cross-linking them and that serves as a cytoplasmic membrane anchor for the Z ring. Also required for the recruitment to the septal ring of downstream cell division proteins. The chain is Cell division protein ZipA from Xylella fastidiosa (strain 9a5c).